The chain runs to 128 residues: MMPKEEQVLKNLTMENANEENEKKDEKEQDANKGEPLALSLGAGEYCVPRGNRRRFRVRQPILHYRWDMTQRLGKPQARMREENIERIGEEMRQLMEKLREKQLSHSLRAVSTDPPHHEHNDEFCLMP.

The disordered stretch occupies residues 1–44 (MMPKEEQVLKNLTMENANEENEKKDEKEQDANKGEPLALSLGAG). The segment covering 20 to 33 (ENEKKDEKEQDANK) has biased composition (basic and acidic residues). Arg50 is subject to Omega-N-methylarginine. A disordered region spans residues 103–128 (QLSHSLRAVSTDPPHHEHNDEFCLMP). The span at 115-128 (PPHHEHNDEFCLMP) shows a compositional bias: basic and acidic residues. Residues 117-121 (HHEHN) are his cluster. A Zn(2+)-binding site is contributed by Cys125.

It belongs to the BEX family. In terms of assembly, interacts with LMO2, possibly leading to regulate the transcriptional activity of a DNA-binding complex containing LMO2. Interacts with OMP.

It is found in the cytoplasm. The protein resides in the nucleus. Functionally, regulator of mitochondrial apoptosis and G1 cell cycle. Regulates the level of PP2A regulatory subunit B and PP2A phosphatase activity. In absence of reductive stress, acts as a pseudosubstrate for the CRL2(FEM1B) complex: associates with FEM1B via zinc, thereby preventing association between FEM1B and its substrates. This is Protein BEX2 (BEX2) from Bos taurus (Bovine).